A 366-amino-acid chain; its full sequence is Isocitrate dehydrogenase [NAD] subunit alpha, mitochondrial (366 aa).

Residues 1-27 constitute a mitochondrion transit peptide; that stretch reads MAGPAWISKVSRLLGAFHNQKQVTRGF. The residue at position 77 (lysine 77) is an N6-succinyllysine. Threonine 101 bears the Phosphothreonine mark. Arginine 115, arginine 125, and arginine 146 together coordinate substrate. Lysine 223 bears the N6-acetyllysine mark. Aspartate 233, aspartate 257, and aspartate 261 together coordinate Mg(2+). The residue at position 343 (lysine 343) is an N6-acetyllysine; alternate. An N6-succinyllysine; alternate modification is found at lysine 343. Lysine 350 carries the N6-succinyllysine modification.

The protein belongs to the isocitrate and isopropylmalate dehydrogenases family. As to quaternary structure, heterooligomer of subunits alpha (IDH3A), beta (IDH3B), and gamma (IDH3G) in the apparent ratio of 2:1:1. The heterodimer containing one IDH3A and one IDH3B subunit and the heterodimer containing one IDH3A and one IDH3G subunit assemble into a heterotetramer (which contains two subunits of IDH3A, one of IDH3B and one of IDH3G) and further into the heterooctamer. Mg(2+) is required as a cofactor. Mn(2+) serves as cofactor.

The protein localises to the mitochondrion. The enzyme catalyses D-threo-isocitrate + NAD(+) = 2-oxoglutarate + CO2 + NADH. Its activity is regulated as follows. The heterotetramer and the heterodimer composed of IDH3A and IDH3G subunits can be allosterically activated by citrate (CIT) or/and ADP, and the two activators can act independently or synergistically. The heterodimer composed of IDH3A and IDH3B subunits cannot be allosterically regulated and the allosteric regulation of the heterotetramer is through the IDH3G subunit and not the IDH3B subunit. The IDH3G subunit contains the allosteric site which consists of a CIT-binding site and an ADP-binding site, and the binding of CIT and ADP causes conformational changes at the allosteric site which are transmitted to the active site in the catalytic subunit (IDH3A) through a cascade of conformational changes at the heterodimer interface, leading to stabilization of the isocitrate-binding at the active site and thus activation of the enzyme. ATP can activate the heterotetramer and the heterodimer composed of IDH3A and IDH3G subunits at low concentrations but inhibits their activities at high concentrations, whereas ATP exhibits only inhibitory effect on the heterodimer composed of IDH3A and IDH3B subunits. Catalytic subunit of the enzyme which catalyzes the decarboxylation of isocitrate (ICT) into alpha-ketoglutarate. The heterodimer composed of the alpha (IDH3A) and beta (IDH3B) subunits and the heterodimer composed of the alpha (IDH3A) and gamma (IDH3G) subunits, have considerable basal activity but the full activity of the heterotetramer (containing two subunits of IDH3A, one of IDH3B and one of IDH3G) requires the assembly and cooperative function of both heterodimers. The protein is Isocitrate dehydrogenase [NAD] subunit alpha, mitochondrial of Bos taurus (Bovine).